A 451-amino-acid chain; its full sequence is Phosphoglucosamine mutase (451 aa).

The active-site Phosphoserine intermediate is Ser107. Residues Ser107, Asp246, Asp248, and Asp250 each coordinate Mg(2+). At Ser107 the chain carries Phosphoserine.

The protein belongs to the phosphohexose mutase family. The cofactor is Mg(2+). Post-translationally, activated by phosphorylation.

The catalysed reaction is alpha-D-glucosamine 1-phosphate = D-glucosamine 6-phosphate. Its function is as follows. Catalyzes the conversion of glucosamine-6-phosphate to glucosamine-1-phosphate. This chain is Phosphoglucosamine mutase, found in Burkholderia ambifaria (strain MC40-6).